Here is a 313-residue protein sequence, read N- to C-terminus: Ribosomal RNA small subunit methyltransferase H (313 aa).

S-adenosyl-L-methionine-binding positions include 35–37, D55, F79, D100, and Q107; that span reads GGH.

The protein belongs to the methyltransferase superfamily. RsmH family.

The protein localises to the cytoplasm. The catalysed reaction is cytidine(1402) in 16S rRNA + S-adenosyl-L-methionine = N(4)-methylcytidine(1402) in 16S rRNA + S-adenosyl-L-homocysteine + H(+). Its function is as follows. Specifically methylates the N4 position of cytidine in position 1402 (C1402) of 16S rRNA. This chain is Ribosomal RNA small subunit methyltransferase H, found in Burkholderia orbicola (strain MC0-3).